Reading from the N-terminus, the 252-residue chain is MAATLCCRLLPKAGWVPLTQSVRHGSKAVTRHKKPVHFQKQKLLAVTEYIPPTLSAPPAALAPRVKKTGEESSLAVMLRKDLENLFQEYKMIAVAQNNAISAEDMIHLKHRLKKHAINVKFFPNQVTRSFLNSSIYGNMSPLIFGETVLLASKEPKVKEMLQALRHNPQIVLLGACIENTLFSYQGILSYSKLPSIAIIRGELVSGLTMMTSKTVSMLHHHPAHLSALLQQYVKQQSSADTDKDASIQEAAA.

The N-terminal 24 residues, 1-24 (MAATLCCRLLPKAGWVPLTQSVRH), are a transit peptide targeting the mitochondrion.

It belongs to the universal ribosomal protein uL10 family. In terms of assembly, component of the mitochondrial ribosome large subunit (39S) which comprises a 16S rRNA and about 50 distinct proteins.

Its subcellular location is the mitochondrion. The polypeptide is Large ribosomal subunit protein uL10m (mrpl10) (Danio rerio (Zebrafish)).